The following is a 372-amino-acid chain: Geranylgeranyl pyrophosphate synthase 4 (372 aa).

An N-terminal signal peptide occupies residues methionine 1–threonine 22. Positions 121, 124, and 153 each coordinate isopentenyl diphosphate. Residues aspartate 160 and aspartate 166 each contribute to the Mg(2+) site. Arginine 171 is a dimethylallyl diphosphate binding site. An isopentenyl diphosphate-binding site is contributed by arginine 172. Residues lysine 257, threonine 258, glutamine 295, lysine 312, and lysine 322 each coordinate dimethylallyl diphosphate.

Belongs to the FPP/GGPP synthase family. In terms of assembly, monomer. Requires Mg(2+) as cofactor. In terms of tissue distribution, faintly expressed in flowers. Expressed in roots and siliques.

The protein resides in the endoplasmic reticulum. It catalyses the reaction isopentenyl diphosphate + dimethylallyl diphosphate = (2E)-geranyl diphosphate + diphosphate. It carries out the reaction isopentenyl diphosphate + (2E)-geranyl diphosphate = (2E,6E)-farnesyl diphosphate + diphosphate. The catalysed reaction is isopentenyl diphosphate + (2E,6E)-farnesyl diphosphate = (2E,6E,10E)-geranylgeranyl diphosphate + diphosphate. The protein operates within isoprenoid biosynthesis; farnesyl diphosphate biosynthesis; farnesyl diphosphate from geranyl diphosphate and isopentenyl diphosphate: step 1/1. It participates in isoprenoid biosynthesis; geranyl diphosphate biosynthesis; geranyl diphosphate from dimethylallyl diphosphate and isopentenyl diphosphate: step 1/1. Its pathway is isoprenoid biosynthesis; geranylgeranyl diphosphate biosynthesis; geranylgeranyl diphosphate from farnesyl diphosphate and isopentenyl diphosphate: step 1/1. Functionally, catalyzes the trans-addition of the three molecules of isopentenyl diphosphate (IPP) onto dimethylallyl diphosphate (DMAPP) to form geranylgeranyl diphosphate. The chain is Geranylgeranyl pyrophosphate synthase 4 from Arabidopsis thaliana (Mouse-ear cress).